The following is a 65-amino-acid chain: Lantibiotic lacticin 3147 A2 (65 aa).

The propeptide occupies 1–36; that stretch reads MKEKNMKKNDTIELQLGKYLEDDMIELAEGDESHGG. At T37 the chain carries 2-oxobutanoic acid. 2,3-didehydrobutyrine occurs at positions 38 and 41. 2 positions are modified to 2,3-didehydroalanine (Ser): S45 and S48. The segment at residues 52 to 56 is a cross-link (lanthionine (Ser-Cys)); sequence STNTC. 2 cross-links (beta-methyllanthionine (Thr-Cys)) span residues 58 to 61 and 62 to 65; these read TTKC and TRAC.

Post-translationally, maturation of lantibiotics involves the enzymatic conversion of Thr, and Ser into dehydrated AA and the formation of thioether bonds with cysteine. This is followed by membrane translocation and cleavage of the modified precursor. It is not established whether the 2,3-didehydrobutyrines are the E- or Z-isomers. In the NMR model they were assumed to be the Z-isomer.

It is found in the secreted. Its function is as follows. Lanthionine-containing peptide antibiotic (lantibiotic) active on Gram-positive bacteria. The bactericidal activity of lantibiotics is based on depolarization of energized bacterial cytoplasmic membranes, initiated by the formation of aqueous transmembrane pores. When present individually lacticin 3147 A2 exhibits weak activity towards L.lactis strain AM2 and L.lactis strain HP, and no activity towards L.lactis strain IFPL359, but when combined with lacticin 3147 A1 it displays strong activity towards all three strains. In Lactococcus lactis subsp. lactis (Streptococcus lactis), this protein is Lantibiotic lacticin 3147 A2.